Here is a 283-residue protein sequence, read N- to C-terminus: Protein-L-isoaspartate O-methyltransferase (283 aa).

S122 is an active-site residue.

It belongs to the methyltransferase superfamily. L-isoaspartyl/D-aspartyl protein methyltransferase family.

The protein localises to the cytoplasm. The enzyme catalyses [protein]-L-isoaspartate + S-adenosyl-L-methionine = [protein]-L-isoaspartate alpha-methyl ester + S-adenosyl-L-homocysteine. Its function is as follows. Catalyzes the methyl esterification of L-isoaspartyl residues in peptides and proteins that result from spontaneous decomposition of normal L-aspartyl and L-asparaginyl residues. It plays a role in the repair and/or degradation of damaged proteins. The polypeptide is Protein-L-isoaspartate O-methyltransferase (Leptothrix cholodnii (strain ATCC 51168 / LMG 8142 / SP-6) (Leptothrix discophora (strain SP-6))).